Here is an 854-residue protein sequence, read N- to C-terminus: V-type proton ATPase 116 kDa subunit a 2 (854 aa).

Residues 1 to 393 lie on the Cytoplasmic side of the membrane; that stretch reads MGSLFRSETM…DAYGVGSYQE (393 aa). Residues 394-412 traverse the membrane as a helical segment; the sequence is VNPALFTIITFPFLFAVMF. The Vacuolar portion of the chain corresponds to 413 to 414; the sequence is GD. The chain crosses the membrane as a helical span at residues 415 to 431; it reads FGHGFVMFLFALLLVLN. Residues 432–445 are Cytoplasmic-facing; it reads ENHPRLNQSQEIMR. A helical membrane pass occupies residues 446-475; that stretch reads MFFNGRYILLLMGLFSVYTGLIYNDCFSKS. Residues 476-549 lie on the Vacuolar side of the membrane; the sequence is VNLFGSRWNV…ATNRLTFLNS (74 aa). The chain crosses the membrane as a helical span at residues 550–569; it reads FKMKMSVILGITHMTFGVIL. Over 570 to 587 the chain is Cytoplasmic; sequence GIFNHLHFRKKFNICLVS. Residues 588-608 traverse the membrane as a helical segment; it reads IPELLFMLCIFGYLIFMIIYK. The Vacuolar segment spans residues 609–651; that stretch reads WLVYSAETSRTAPSILIEFISMFLFLASDTGGLYPGQEHVQRL. A helical transmembrane segment spans residues 652–671; that stretch reads LLLITVLSVPVLFLGKPLFL. Residues 672 to 739 are Cytoplasmic-facing; the sequence is LWLHRGRSCF…EILMTQIIHS (68 aa). Phosphoserine occurs at positions 695 and 700. A helical transmembrane segment spans residues 740 to 764; the sequence is IEYCLGCISNTASYLRLWALSLAHA. Topologically, residues 765-785 are vacuolar; that stretch reads QLSEVLWAMLMHVGLRVDTAY. Residues 786–824 traverse the membrane as a helical segment; that stretch reads GVLVLLPVIAFFAVLTIFILLIMEGLSAFLHAIRLHWVE. The Cytoplasmic segment spans residues 825–854; the sequence is FQNKFYVGAGTKFVPFSFRLLSSKFSDDLA.

It belongs to the V-ATPase 116 kDa subunit family. As to quaternary structure, V-ATPase is a heteromultimeric enzyme made up of two complexes: the ATP-hydrolytic V1 complex and the proton translocation V0 complex. The V1 complex consists of three catalytic AB heterodimers that form a heterohexamer, three peripheral stalks each consisting of EG heterodimers, one central rotor including subunits D and F, and the regulatory subunits C and H. The proton translocation complex V0 consists of the proton transport subunit a, a ring of proteolipid subunits c9c'', rotary subunit d, subunits e and f, and the accessory subunits ATP6AP1/Ac45 and ATP6AP2/PRR. Directly interacts with PSCD2 through its N-terminal cytosolic tail in an intra-endosomal acidification-dependent manner. Disruption of this interaction results in the inhibition of endocytosis. Interacts with SPAAR. As to expression, highly expressed in lung, kidney and spleen.

It is found in the cell membrane. The protein localises to the endosome membrane. Functionally, subunit of the V0 complex of vacuolar(H+)-ATPase (V-ATPase), a multisubunit enzyme composed of a peripheral complex (V1) that hydrolyzes ATP and a membrane integral complex (V0) that translocates protons. V-ATPase is responsible for acidifying and maintaining the pH of intracellular compartments and in some cell types, is targeted to the plasma membrane, where it is responsible for acidifying the extracellular environment. Essential component of the endosomal pH-sensing machinery. May play a role in maintaining the Golgi functions, such as glycosylation maturation, by controlling the Golgi pH. In aerobic conditions, involved in intracellular iron homeostasis, thus triggering the activity of Fe(2+) prolyl hydroxylase (PHD) enzymes, and leading to HIF1A hydroxylation and subsequent proteasomal degradation. This is V-type proton ATPase 116 kDa subunit a 2 (ATP6V0A2) from Bos taurus (Bovine).